Consider the following 152-residue polypeptide: Nucleoside diphosphate kinase B (152 aa).

The interval 1–66 is interaction with AKAP13; sequence MANLERTFIA…DRPFFPGLVK (66 aa). Residues K12, F60, R88, T94, R105, and N115 each contribute to the ATP site. H118 acts as the Pros-phosphohistidine intermediate in catalysis.

The protein belongs to the NDK family. As to quaternary structure, hexamer of two different chains: An and B (A6, A5B, A4B2, A3B3, A2B4, AB5, B6). Interacts with CAPN8. Interacts with AKAP13. Interacts with ITGB1BP1 (via C-terminal domain region). Interacts with BCL2L10. Requires Mg(2+) as cofactor. Ubiquitously expressed.

The protein resides in the cytoplasm. Its subcellular location is the cell projection. It is found in the lamellipodium. The protein localises to the ruffle. It localises to the perinuclear region. The protein resides in the nucleus. It carries out the reaction a 2'-deoxyribonucleoside 5'-diphosphate + ATP = a 2'-deoxyribonucleoside 5'-triphosphate + ADP. The enzyme catalyses a ribonucleoside 5'-diphosphate + ATP = a ribonucleoside 5'-triphosphate + ADP. It catalyses the reaction ATP + protein L-histidine = ADP + protein N-phospho-L-histidine.. Major role in the synthesis of nucleoside triphosphates other than ATP. The ATP gamma phosphate is transferred to the NDP beta phosphate via a ping-pong mechanism, using a phosphorylated active-site intermediate. Negatively regulates Rho activity by interacting with AKAP13/LBC. Acts as a transcriptional activator of the MYC gene; binds DNA non-specifically. Binds to both single-stranded guanine- and cytosine-rich strands within the nuclease hypersensitive element (NHE) III(1) region of the MYC gene promoter. Does not bind to duplex NHE III(1). Has G-quadruplex (G4) DNA-binding activity, which is independent of its nucleotide-binding and kinase activity. Binds both folded and unfolded G4 with similar low nanomolar affinities. Stabilizes folded G4s regardless of whether they are prefolded or not. Exhibits histidine protein kinase activity. The polypeptide is Nucleoside diphosphate kinase B (NME2) (Homo sapiens (Human)).